Reading from the N-terminus, the 639-residue chain is tRNA 5-methylaminomethyl-2-thiouridine biosynthesis bifunctional protein MnmC (639 aa).

The interval 1–228 (MSEPIEWLED…KRDNLQATYA (228 aa)) is tRNA (mnm(5)s(2)U34)-methyltransferase. The FAD-dependent cmnm(5)s(2)U34 oxidoreductase stretch occupies residues 254–639 (VGAGLAGAAV…SERWLGYEPQ (386 aa)).

In the N-terminal section; belongs to the methyltransferase superfamily. tRNA (mnm(5)s(2)U34)-methyltransferase family. It in the C-terminal section; belongs to the DAO family. FAD is required as a cofactor.

It is found in the cytoplasm. The catalysed reaction is 5-aminomethyl-2-thiouridine(34) in tRNA + S-adenosyl-L-methionine = 5-methylaminomethyl-2-thiouridine(34) in tRNA + S-adenosyl-L-homocysteine + H(+). Catalyzes the last two steps in the biosynthesis of 5-methylaminomethyl-2-thiouridine (mnm(5)s(2)U) at the wobble position (U34) in tRNA. Catalyzes the FAD-dependent demodification of cmnm(5)s(2)U34 to nm(5)s(2)U34, followed by the transfer of a methyl group from S-adenosyl-L-methionine to nm(5)s(2)U34, to form mnm(5)s(2)U34. The chain is tRNA 5-methylaminomethyl-2-thiouridine biosynthesis bifunctional protein MnmC from Acidovorax sp. (strain JS42).